A 135-amino-acid chain; its full sequence is Small ribosomal subunit protein uS12 (135 aa).

Aspartate 89 is modified (3-methylthioaspartic acid). A disordered region spans residues 101–135; sequence SLDTSGVADRKQSRSKYGAKQPKAGAAAPAKGKGR. Positions 118 to 135 are enriched in low complexity; that stretch reads GAKQPKAGAAAPAKGKGR.

It belongs to the universal ribosomal protein uS12 family. In terms of assembly, part of the 30S ribosomal subunit. Contacts proteins S8 and S17. May interact with IF1 in the 30S initiation complex.

Its function is as follows. With S4 and S5 plays an important role in translational accuracy. Functionally, interacts with and stabilizes bases of the 16S rRNA that are involved in tRNA selection in the A site and with the mRNA backbone. Located at the interface of the 30S and 50S subunits, it traverses the body of the 30S subunit contacting proteins on the other side and probably holding the rRNA structure together. The combined cluster of proteins S8, S12 and S17 appears to hold together the shoulder and platform of the 30S subunit. This is Small ribosomal subunit protein uS12 from Chlorobium limicola (strain DSM 245 / NBRC 103803 / 6330).